The chain runs to 127 residues: Glycine cleavage system H protein (127 aa).

Positions 24–106 (TVTVGITDHA…FEGAWIAKIK (83 aa)) constitute a Lipoyl-binding domain. An N6-lipoyllysine modification is found at lysine 65.

It belongs to the GcvH family. In terms of assembly, the glycine cleavage system is composed of four proteins: P, T, L and H. Requires (R)-lipoate as cofactor.

In terms of biological role, the glycine cleavage system catalyzes the degradation of glycine. The H protein shuttles the methylamine group of glycine from the P protein to the T protein. This Marinomonas sp. (strain MWYL1) protein is Glycine cleavage system H protein.